We begin with the raw amino-acid sequence, 469 residues long: 1-aminocyclopropane-1-carboxylate synthase 3 (469 aa).

The residue at position 272 (Lys-272) is an N6-(pyridoxal phosphate)lysine. Residues 432 to 452 (APNATNHQNQQQSNANSKKKS) form a disordered region. Residues 437 to 447 (NHQNQQQSNAN) show a composition bias toward low complexity.

The protein belongs to the class-I pyridoxal-phosphate-dependent aminotransferase family. Homodimer. Pyridoxal 5'-phosphate serves as cofactor.

The catalysed reaction is S-adenosyl-L-methionine = 1-aminocyclopropane-1-carboxylate + S-methyl-5'-thioadenosine + H(+). Its pathway is alkene biosynthesis; ethylene biosynthesis via S-adenosyl-L-methionine; ethylene from S-adenosyl-L-methionine: step 1/2. Its function is as follows. Catalyzes the formation of 1-aminocyclopropane-1-carboxylate, a direct precursor of ethylene in higher plants. This Solanum lycopersicum (Tomato) protein is 1-aminocyclopropane-1-carboxylate synthase 3 (ACS3).